A 426-amino-acid chain; its full sequence is MSVKMEKIEKNTVELEVTVDAKVFSAAVTKAAKALANKVNIPGFRKGKAPRTMVERYVGTAALYNDAVDDILGVEYMKAVNEAGIEPVDRPDVDLIQMEDGKELVFKAKVTVKPEVELGSYKGLEVEKTAAVVTDEELEQELQRKQEQHAKVLNLEEGTVQAQDTVNIDFAGSVDGVAFEGGTAEGYDLVIGSGSFIPGFEEQLIGAQIGQEVDVNVRFPDEYHVADLQGKDALFKVKVNKLKRKEYAPLDDEFAKDISEFETLDELKADLRDKLMTAAEQRAEMEQKNAIVAKAVENASVEIPEAMVNSRIDMMLDDMAQNLSYQGLDLETYCHYTGTSMDTMREELRPRASENLKTELVLEAIAKVEGITVSEEELNNELAKLAERYQTSPENLKQALMARGDMGMYRQSLVSEKTVNFLVEQA.

Residues 163–248 enclose the PPIase FKBP-type domain; the sequence is QDTVNIDFAG…VNKLKRKEYA (86 aa).

It belongs to the FKBP-type PPIase family. Tig subfamily.

The protein localises to the cytoplasm. The enzyme catalyses [protein]-peptidylproline (omega=180) = [protein]-peptidylproline (omega=0). Functionally, involved in protein export. Acts as a chaperone by maintaining the newly synthesized protein in an open conformation. Functions as a peptidyl-prolyl cis-trans isomerase. The sequence is that of Trigger factor 1 from Desulfitobacterium hafniense (strain Y51).